Reading from the N-terminus, the 32-residue chain is Dermatoxin-J2 (32 aa).

Residue Gln32 is modified to Glutamine amide.

In terms of tissue distribution, expressed by the skin glands.

Its subcellular location is the secreted. Antimicrobial peptide. The chain is Dermatoxin-J2 from Phasmahyla jandaia (Jandaia leaf frog).